The chain runs to 259 residues: Dolichol-phosphate mannosyltransferase subunit 1 (259 aa).

Ala-2 carries the post-translational modification N-acetylalanine. Ser-3 carries the post-translational modification Phosphoserine. GDP-alpha-D-mannose is bound by residues Pro-31, Tyr-33, Glu-35, Ile-62, Asp-64, Asp-117, Ala-118, Asp-119, Arg-146, Arg-233, and Lys-239. A Mg(2+)-binding site is contributed by Asp-119. A Mn(2+)-binding site is contributed by Asp-119.

Belongs to the glycosyltransferase 2 family. In terms of assembly, component of the dolichol-phosphate mannose (DPM) synthase complex composed of DPM1, DPM2 and DPM3; within the complex, directly interacts with DPM3. This interaction may stabilize DPM1. Mg(2+) serves as cofactor. Mn(2+) is required as a cofactor. The cofactor is Ca(2+).

It is found in the endoplasmic reticulum. The catalysed reaction is a di-trans,poly-cis-dolichyl phosphate + GDP-alpha-D-mannose = a di-trans,poly-cis-dolichyl beta-D-mannosyl phosphate + GDP. It functions in the pathway protein modification; protein glycosylation. Its function is as follows. Transfers mannose from GDP-mannose to dolichol monophosphate to form dolichol phosphate mannose (Dol-P-Man) which is the mannosyl donor in pathways leading to N-glycosylation, glycosyl phosphatidylinositol membrane anchoring, and O-mannosylation of proteins; catalytic subunit of the dolichol-phosphate mannose (DPM) synthase complex. This is Dolichol-phosphate mannosyltransferase subunit 1 (DPM1) from Sus scrofa (Pig).